We begin with the raw amino-acid sequence, 123 residues long: Small ribosomal subunit protein uS12 (123 aa).

3-methylthioaspartic acid is present on Asp-89.

Belongs to the universal ribosomal protein uS12 family. Part of the 30S ribosomal subunit. Contacts proteins S8 and S17. May interact with IF1 in the 30S initiation complex.

In terms of biological role, with S4 and S5 plays an important role in translational accuracy. Its function is as follows. Interacts with and stabilizes bases of the 16S rRNA that are involved in tRNA selection in the A site and with the mRNA backbone. Located at the interface of the 30S and 50S subunits, it traverses the body of the 30S subunit contacting proteins on the other side and probably holding the rRNA structure together. The combined cluster of proteins S8, S12 and S17 appears to hold together the shoulder and platform of the 30S subunit. In Myxococcus xanthus, this protein is Small ribosomal subunit protein uS12.